The sequence spans 195 residues: MIVEPTVATYNTSDFRKGLKVQIDGEPYLITEMNFVKPGKGNAMYKCKMKNLIRGTTLDRTYKGGDSLEAADVETTTVQFLYRQGQDYVFMDGTTFEQYEVPNEVAGDIWKYLKDGTECSMTLYNGAAIIVEPPQHVQLEVTECGPGTKGDTATNVTKPAMVETGAEFNVPGFIKEGNIIKINTLNNEYVERVNN.

It belongs to the elongation factor P family.

The protein resides in the cytoplasm. The protein operates within protein biosynthesis; polypeptide chain elongation. In terms of biological role, involved in peptide bond synthesis. Stimulates efficient translation and peptide-bond synthesis on native or reconstituted 70S ribosomes in vitro. Probably functions indirectly by altering the affinity of the ribosome for aminoacyl-tRNA, thus increasing their reactivity as acceptors for peptidyl transferase. This Rhodopirellula baltica (strain DSM 10527 / NCIMB 13988 / SH1) protein is Elongation factor P.